A 389-amino-acid polypeptide reads, in one-letter code: P2X purinoceptor 4a (389 aa).

Over 1–36 (MSESVGCCDSVSQCFFDYYTSKILIIRSKKVGTLNR) the chain is Cytoplasmic. A helical membrane pass occupies residues 37–57 (FTQALVIAYVIGYVCVYNKGY). Topologically, residues 58–343 (QDTDTVLSSV…NIIPTLLNMG (286 aa)) are extracellular. ATP is bound by residues K70 and K72. CTP-binding residues include K70 and K72. Residues N78 and N113 are each glycosylated (N-linked (GlcNAc...) asparagine). Disulfide bonds link C119/C168, C129/C152, and C135/C162. R143 lines the CTP pocket. N187 carries an N-linked (GlcNAc...) asparagine glycan. T189 and L191 together coordinate ATP. T189 contributes to the CTP binding site. A glycan (N-linked (GlcNAc...) asparagine) is linked at N213. Disulfide bonds link C220/C230 and C264/C273. ATP contacts are provided by N296, R298, and K316. CTP contacts are provided by N296, R298, and K316. The chain crosses the membrane as a helical span at residues 344–364 (AGLALLGLVNVICDWIVLTFM). Residues 365 to 389 (KRKQHYKEQKYTYVDDFGLLHNEDK) are Cytoplasmic-facing.

Belongs to the P2X receptor family. In terms of assembly, functional P2XRs are organized as homomeric and heteromeric trimers. Forms homotrimer.

Its subcellular location is the cell membrane. The protein resides in the lysosome membrane. The catalysed reaction is K(+)(in) = K(+)(out). It catalyses the reaction Na(+)(in) = Na(+)(out). It carries out the reaction Ca(2+)(in) = Ca(2+)(out). Activated by ATP. pH-dependent and inhibited by acidic pH. Functionally, ATP-gated nonselective transmembrane cation channel permeable to potassium, sodium and calcium. CTP, but not GTP or UTP, functions as a weak affinity agonist for P2RX4. Activated by extracellularly released ATP, it plays multiple role in immunity and central nervous system physiology. Could also function as an ATP-gated cation channel of lysosomal membranes. The chain is P2X purinoceptor 4a (p2rx4a) from Danio rerio (Zebrafish).